Consider the following 276-residue polypeptide: Imidazole glycerol phosphate synthase subunit HisF (276 aa).

Catalysis depends on residues aspartate 11 and aspartate 130.

The protein belongs to the HisA/HisF family. As to quaternary structure, heterodimer of HisH and HisF.

The protein resides in the cytoplasm. It catalyses the reaction 5-[(5-phospho-1-deoxy-D-ribulos-1-ylimino)methylamino]-1-(5-phospho-beta-D-ribosyl)imidazole-4-carboxamide + L-glutamine = D-erythro-1-(imidazol-4-yl)glycerol 3-phosphate + 5-amino-1-(5-phospho-beta-D-ribosyl)imidazole-4-carboxamide + L-glutamate + H(+). It participates in amino-acid biosynthesis; L-histidine biosynthesis; L-histidine from 5-phospho-alpha-D-ribose 1-diphosphate: step 5/9. Functionally, IGPS catalyzes the conversion of PRFAR and glutamine to IGP, AICAR and glutamate. The HisF subunit catalyzes the cyclization activity that produces IGP and AICAR from PRFAR using the ammonia provided by the HisH subunit. The chain is Imidazole glycerol phosphate synthase subunit HisF from Beijerinckia indica subsp. indica (strain ATCC 9039 / DSM 1715 / NCIMB 8712).